The chain runs to 82 residues: Precursor of CEP3 (82 aa).

An N-terminal signal peptide occupies residues 1 to 24 (MATINVYVFAFIFLLTISVGSIEG). Positions 25-63 (RKLTKFTVTTSEEIRAGGSVLSSSPPTEPLESPPSHGVD) are excised as a propeptide. Residues 40–82 (AGGSVLSSSPPTEPLESPPSHGVDTFRPTEPGHSPGIGHSVHN) form a disordered region. A hydroxyproline mark is found at Pro67, Pro70, and Pro74. A propeptide spanning residues 79–82 (SVHN) is cleaved from the precursor.

This sequence belongs to the C-terminally encoded plant signaling peptide (CEP) family. In terms of assembly, interacts with the CEP receptor CEPR1. The mature small signaling peptide is generated by proteolytic processing of the longer precursor. As to expression, mostly expressed in roots. Present in lateral roots (especially in vasculature), root-hypocotyl junction and cotyledons.

The protein resides in the secreted. It is found in the extracellular space. It localises to the apoplast. Functionally, extracellular signaling peptide that represses primary root growth rate and significantly inhibits lateral root formation. Promotes shoot growth. Modulates leaf morphology. Regulates systemic nitrogen (N)-demand signaling. Mediates systemic up-regulation of genes involved in N uptake and assimilation pathways. This chain is Precursor of CEP3, found in Arabidopsis thaliana (Mouse-ear cress).